Here is a 131-residue protein sequence, read N- to C-terminus: Holo-[acyl-carrier-protein] synthase (131 aa).

Residues Asp8 and Glu59 each coordinate Mg(2+).

The protein belongs to the P-Pant transferase superfamily. AcpS family. It depends on Mg(2+) as a cofactor.

It is found in the cytoplasm. The enzyme catalyses apo-[ACP] + CoA = holo-[ACP] + adenosine 3',5'-bisphosphate + H(+). Functionally, transfers the 4'-phosphopantetheine moiety from coenzyme A to a Ser of acyl-carrier-protein. The protein is Holo-[acyl-carrier-protein] synthase of Rickettsia conorii (strain ATCC VR-613 / Malish 7).